We begin with the raw amino-acid sequence, 398 residues long: Probable purine permease 17 (398 aa).

The segment at 1–26 (MEMSKASKQTTRHEESEHVQNPEPDQ) is disordered. A compositionally biased stretch (basic and acidic residues) spans 11–20 (TRHEESEHVQ). S29 carries the phosphoserine modification. Helical transmembrane passes span 43-63 (ISVSLCLFLVLLGDSLVMLLL), 88-108 (WTQALIQNAAFPILIPLFFIF), 127-147 (LFFLYLSLGVLVAAHSKLFAL), 155-175 (GIFSLISTTQLIFTAVLTAII), 183-203 (WIIISILLTIVIYVLGTPDFG), 219-239 (WLAFSATIAFSLSLCLIQLGF), 258-278 (VLEMQICVAFVASVVCLVGLF), 301-321 (VLSLVGLALSWQVWAVGMIGL), 332-352 (VVHMCASPFVALFVVLAFDFM), and 355-375 (VFSWPRIGALIGTVLALGSYF).

Belongs to the purine permeases (TC 2.A.7.14) family.

It is found in the membrane. The sequence is that of Probable purine permease 17 (PUP17) from Arabidopsis thaliana (Mouse-ear cress).